A 465-amino-acid chain; its full sequence is Clusterin-like protein 1 (465 aa).

The first 20 residues, Met1–Cys20, serve as a signal peptide directing secretion. Residues Leu62–Val107 adopt a coiled-coil conformation. Intrachain disulfides connect Cys105–Cys333, Cys116–Cys325, Cys119–Cys322, Cys124–Cys315, and Cys131–Cys305. Residues Asn196 and Asn257 are each glycosylated (N-linked (GlcNAc...) asparagine). Positions Leu280–Arg300 are disordered. Asn311, Asn351, Asn412, and Asn430 each carry an N-linked (GlcNAc...) asparagine glycan.

It belongs to the clusterin family.

The protein resides in the secreted. In Bos taurus (Bovine), this protein is Clusterin-like protein 1.